We begin with the raw amino-acid sequence, 501 residues long: HMG-box protein STE11 (501 aa).

The span at proline 142 to proline 153 shows a compositional bias: polar residues. Disordered stretches follow at residues proline 142–leucine 205 and tyrosine 246–glutamine 293. Positions serine 192–proline 204 are enriched in low complexity. A DNA-binding region (HMG box) is located at residues isoleucine 201–lysine 265. Basic and acidic residues predominate over residues tyrosine 246–aspartate 263.

Post-translationally, phosphorylated by MAPK2.

Its subcellular location is the nucleus. This is HMG-box protein STE11 from Pneumocystis carinii.